A 195-amino-acid chain; its full sequence is 3-isopropylmalate dehydratase small subunit (195 aa).

It belongs to the LeuD family. LeuD type 1 subfamily. Heterodimer of LeuC and LeuD.

It catalyses the reaction (2R,3S)-3-isopropylmalate = (2S)-2-isopropylmalate. It functions in the pathway amino-acid biosynthesis; L-leucine biosynthesis; L-leucine from 3-methyl-2-oxobutanoate: step 2/4. Catalyzes the isomerization between 2-isopropylmalate and 3-isopropylmalate, via the formation of 2-isopropylmaleate. This is 3-isopropylmalate dehydratase small subunit from Parafrankia sp. (strain EAN1pec).